The primary structure comprises 152 residues: Ribosome maturation factor RimP (152 aa).

It belongs to the RimP family.

The protein localises to the cytoplasm. In terms of biological role, required for maturation of 30S ribosomal subunits. The sequence is that of Ribosome maturation factor RimP from Brevibacillus brevis (strain 47 / JCM 6285 / NBRC 100599).